A 244-amino-acid chain; its full sequence is MLVEARKKLIFALDVESGASAEEWVRRLRGKVGVFKVGKQLFTRCGPDVVRMIRDHGGEVFLDLKFHDIPNTVAKAAIEACRLGVRMFNVHALGGRAMMAGAAEAVREYFAAGEDVPPLLLGVTILTSSSEETLREVGVDRPVEEMVPRLACLAKGAGLDGVVASPREVGLIRRACGRDFAIVTPGVRPSFAETNDQQRIMTPGEAIAAGSDFLVVGRPIAASEDPVGAAQRIVEEMAAALEEG.

Substrate-binding positions include Asp14, Lys36, 63-72 (DLKFHDIPNT), Thr127, Arg188, Gln197, Gly217, and Arg218. Lys65 (proton donor) is an active-site residue.

The protein belongs to the OMP decarboxylase family. Type 1 subfamily. As to quaternary structure, homodimer.

The catalysed reaction is orotidine 5'-phosphate + H(+) = UMP + CO2. It functions in the pathway pyrimidine metabolism; UMP biosynthesis via de novo pathway; UMP from orotate: step 2/2. Its function is as follows. Catalyzes the decarboxylation of orotidine 5'-monophosphate (OMP) to uridine 5'-monophosphate (UMP). This Syntrophotalea carbinolica (strain DSM 2380 / NBRC 103641 / GraBd1) (Pelobacter carbinolicus) protein is Orotidine 5'-phosphate decarboxylase.